The following is a 266-amino-acid chain: GTP cyclohydrolase III (266 aa).

Belongs to the archaeal-type GTP cyclohydrolase family.

It catalyses the reaction GTP + 3 H2O = 2-amino-5-formylamino-6-(5-phospho-D-ribosylamino)pyrimidin-4(3H)-one + 2 phosphate + 2 H(+). Functionally, catalyzes the formation of 2-amino-5-formylamino-6-ribofuranosylamino-4(3H)-pyrimidinone ribonucleotide monophosphate and inorganic phosphate from GTP. Also has an independent pyrophosphate phosphohydrolase activity. In Methanococcus maripaludis (strain C5 / ATCC BAA-1333), this protein is GTP cyclohydrolase III.